Reading from the N-terminus, the 103-residue chain is Large ribosomal subunit protein uL24 (103 aa).

It belongs to the universal ribosomal protein uL24 family. As to quaternary structure, part of the 50S ribosomal subunit.

One of two assembly initiator proteins, it binds directly to the 5'-end of the 23S rRNA, where it nucleates assembly of the 50S subunit. Its function is as follows. One of the proteins that surrounds the polypeptide exit tunnel on the outside of the subunit. The polypeptide is Large ribosomal subunit protein uL24 (Haemophilus influenzae (strain PittEE)).